A 257-amino-acid chain; its full sequence is Imidazole glycerol phosphate synthase subunit HisF (257 aa).

Active-site residues include Asp-12 and Asp-131.

This sequence belongs to the HisA/HisF family. In terms of assembly, heterodimer of HisH and HisF.

It localises to the cytoplasm. The catalysed reaction is 5-[(5-phospho-1-deoxy-D-ribulos-1-ylimino)methylamino]-1-(5-phospho-beta-D-ribosyl)imidazole-4-carboxamide + L-glutamine = D-erythro-1-(imidazol-4-yl)glycerol 3-phosphate + 5-amino-1-(5-phospho-beta-D-ribosyl)imidazole-4-carboxamide + L-glutamate + H(+). The protein operates within amino-acid biosynthesis; L-histidine biosynthesis; L-histidine from 5-phospho-alpha-D-ribose 1-diphosphate: step 5/9. IGPS catalyzes the conversion of PRFAR and glutamine to IGP, AICAR and glutamate. The HisF subunit catalyzes the cyclization activity that produces IGP and AICAR from PRFAR using the ammonia provided by the HisH subunit. In Teredinibacter turnerae (strain ATCC 39867 / T7901), this protein is Imidazole glycerol phosphate synthase subunit HisF.